Here is a 108-residue protein sequence, read N- to C-terminus: Small ribosomal subunit protein eS25 (108 aa).

Residues 1 to 36 form a disordered region; that stretch reads MAPKKAQAPPPSSKPAKSGGGKQKKKKWSKGKQKEK. Residues 22–31 are compositionally biased toward basic residues; sequence KQKKKKWSKG.

This sequence belongs to the eukaryotic ribosomal protein eS25 family.

This chain is Small ribosomal subunit protein eS25 (RPS25), found in Solanum lycopersicum (Tomato).